The sequence spans 517 residues: 2,3-bisphosphoglycerate-independent phosphoglycerate mutase (517 aa).

Mn(2+) contacts are provided by Asp-14 and Ser-64. The active-site Phosphoserine intermediate is the Ser-64. Residues His-125, 155-156, Arg-187, Arg-193, 259-262, and Lys-334 contribute to the substrate site; these read RD and RPDR. Positions 401, 405, 442, 443, and 461 each coordinate Mn(2+).

It belongs to the BPG-independent phosphoglycerate mutase family. As to quaternary structure, monomer. Requires Mn(2+) as cofactor.

The enzyme catalyses (2R)-2-phosphoglycerate = (2R)-3-phosphoglycerate. It functions in the pathway carbohydrate degradation; glycolysis; pyruvate from D-glyceraldehyde 3-phosphate: step 3/5. Its function is as follows. Catalyzes the interconversion of 2-phosphoglycerate and 3-phosphoglycerate. The protein is 2,3-bisphosphoglycerate-independent phosphoglycerate mutase of Symbiobacterium thermophilum (strain DSM 24528 / JCM 14929 / IAM 14863 / T).